The sequence spans 651 residues: Far upstream element-binding protein 1 (651 aa).

2 disordered regions span residues methionine 1–asparagine 24 and lysine 40–glutamine 92. Alanine 2 carries the N-acetylalanine modification. 2 positions are modified to phosphoserine: serine 48 and serine 51. The span at arginine 61–lysine 73 shows a compositional bias: basic and acidic residues. 3 consecutive KH domains span residues valine 96–leucine 160, asparagine 181–valine 247, and asparagine 271–isoleucine 335. A Phosphoserine modification is found at serine 136. At threonine 149 the chain carries Phosphothreonine. 4 positions are modified to omega-N-methylarginine: arginine 317, arginine 355, arginine 357, and arginine 359. The KH 4 domain maps to leucine 372–isoleucine 439. Serine 411 is modified (phosphoserine). A Phosphothreonine modification is found at threonine 428. Disordered regions lie at residues isoleucine 443–proline 528, alanine 545–glycine 574, and threonine 625–tyrosine 651. Residues proline 464–tyrosine 501 are compositionally biased toward pro residues. Low complexity-rich tracts occupy residues glutamine 514–proline 528 and proline 552–glycine 574. Residue serine 626 is modified to Phosphoserine.

In terms of assembly, found in a complex with PUF60 and far upstream element (FUSE) DNA segment. Interacts with PUF60 and JTV1. Post-translationally, ubiquitinated. This targets the protein for proteasome-mediated degradation.

It localises to the nucleus. Regulates MYC expression by binding to a single-stranded far-upstream element (FUSE) upstream of the MYC promoter. May act both as activator and repressor of transcription. This chain is Far upstream element-binding protein 1 (Fubp1), found in Mus musculus (Mouse).